A 197-amino-acid polypeptide reads, in one-letter code: Protein TIFY 9 (197 aa).

Residues 57–73 show a composition bias toward polar residues; the sequence is STGNNSDSSAKSRSVPS. A disordered region spans residues 57–84; that stretch reads STGNNSDSSAKSRSVPSTPREDQPQIPI. Residues 98–132 enclose the Tify domain; that stretch reads LVSGTVPMTIFYNGSVSVFQVSRNKAGEIMKVANE. Positions 168 to 193 match the Jas motif; that stretch reads PIARRKSLQRFLEKRKERLVSTSPYY. The Nuclear localization signal motif lies at 170–177; that stretch reads ARRKSLQR.

Belongs to the TIFY/JAZ family. Homo- and heterodimer. Interacts with MYC2, MYC3, MYC4, AFPH2/NINJA, TIFY10A/JAZ1, TIFY10B/JAZ2, TIFY6B/JAZ3, TIFY6A/JAZ4, TIFY11B/JAZ6, TIFY5A/JAZ8, TIFY7/JAZ9, TIFY3A/JAZ11 and TIFY3B/JAZ12. Isoform 1 and isoform 2 interact with COI1. Isoform 3 does not interact with COI1. Interacts with RHD6 and RSL1. In terms of processing, ubiquitinated. Targeted for degradation by the SCF(COI1) E3 ubiquitin ligase-proteasome pathway during jasmonate signaling.

The protein localises to the nucleus. Repressor of jasmonate (JA) responses that lacks the entire Jas domain and possesses severe JA insensitivity and resistance to JA-induced degradation. Acts as an endogenous repressor of JA signal output in JA-stimulated cells. Modulator of JA-controlled growth inhibition in response to wounding. Functionally, repressor of jasmonate (JA) responses that lacks part of the Jas domain and possesses JA insensitivity and partial resistance to JA-induced degradation. In terms of biological role, repressor of jasmonate (JA) responses. Interacts with and suppresses RHD6 and RSL1 transcription factor activities to negatively regulate jasmonate-stimulated root hair development. This is Protein TIFY 9 (TIFY9) from Arabidopsis thaliana (Mouse-ear cress).